Reading from the N-terminus, the 559-residue chain is Formate--tetrahydrofolate ligase (559 aa).

An ATP-binding site is contributed by 68–75 (TPAGEGKT).

This sequence belongs to the formate--tetrahydrofolate ligase family.

It carries out the reaction (6S)-5,6,7,8-tetrahydrofolate + formate + ATP = (6R)-10-formyltetrahydrofolate + ADP + phosphate. The protein operates within one-carbon metabolism; tetrahydrofolate interconversion. The sequence is that of Formate--tetrahydrofolate ligase from Rhizobium johnstonii (strain DSM 114642 / LMG 32736 / 3841) (Rhizobium leguminosarum bv. viciae).